The primary structure comprises 422 residues: NADP-dependent malic enzyme (422 aa).

The active-site Proton donor is Y39. The active-site Proton acceptor is K94. K94 is a binding site for substrate. A divalent metal cation-binding residues include E136, D137, and D162. Residues 195 to 198, N286, and N318 each bind NADP(+); that span reads AGAA. Position 318 (N318) interacts with substrate.

Belongs to the malic enzymes family. It depends on Mg(2+) as a cofactor. Mn(2+) serves as cofactor.

The enzyme catalyses (S)-malate + NADP(+) = pyruvate + CO2 + NADPH. It catalyses the reaction oxaloacetate + H(+) = pyruvate + CO2. The chain is NADP-dependent malic enzyme from Halomonas elongata (strain ATCC 33173 / DSM 2581 / NBRC 15536 / NCIMB 2198 / 1H9).